A 260-amino-acid chain; its full sequence is Thiazole synthase (260 aa).

Lys96 acts as the Schiff-base intermediate with DXP in catalysis. 1-deoxy-D-xylulose 5-phosphate contacts are provided by residues Gly157, 183 to 184, and 205 to 206; these read AG and AS.

This sequence belongs to the ThiG family. As to quaternary structure, homotetramer. Forms heterodimers with either ThiH or ThiS.

It localises to the cytoplasm. The catalysed reaction is [ThiS sulfur-carrier protein]-C-terminal-Gly-aminoethanethioate + 2-iminoacetate + 1-deoxy-D-xylulose 5-phosphate = [ThiS sulfur-carrier protein]-C-terminal Gly-Gly + 2-[(2R,5Z)-2-carboxy-4-methylthiazol-5(2H)-ylidene]ethyl phosphate + 2 H2O + H(+). It participates in cofactor biosynthesis; thiamine diphosphate biosynthesis. Its function is as follows. Catalyzes the rearrangement of 1-deoxy-D-xylulose 5-phosphate (DXP) to produce the thiazole phosphate moiety of thiamine. Sulfur is provided by the thiocarboxylate moiety of the carrier protein ThiS. In vitro, sulfur can be provided by H(2)S. This is Thiazole synthase from Corynebacterium glutamicum (strain R).